Here is a 329-residue protein sequence, read N- to C-terminus: MWITTTPWSKHSPNWVLADNGEKLIVPEIILGDAQGPTRNEWYIGLSSVLGFSFWSPDYDGVGTWLDAATQLNEQGGGDVITYSSGAHIVRTLLLAASQSNVHSTFTSKALGNDQTSSMTSSTTAVTVAKSGDGQQQTGEQKEEDWKDISKADLFKDDPYVLKNFGDSTTQAKMQSGGSTNSNGNGSQASLAFTKKALSLLKFLVDNKILKKDKVKEAIMNPDQYLSKRSKLDSNNQKPTKDDFIGSEFKDLYENAAKLNRFNSIWAEKDTDNAKFLITVVDSYFPVLPVPAAGLNETSPTLLKPWFQFRSAPSGNGTIRDYGFIPENK.

The tract at residues 109-147 (KALGNDQTSSMTSSTTAVTVAKSGDGQQQTGEQKEEDWK) is disordered. Over residues 116-131 (TSSMTSSTTAVTVAKS) the composition is skewed to low complexity.

To the C-terminal of MG321/MPN_456.

This is an uncharacterized protein from Mycoplasma pneumoniae (strain ATCC 29342 / M129 / Subtype 1) (Mycoplasmoides pneumoniae).